The primary structure comprises 127 residues: MAGVRARAPLPLALLLSLPAAPGGRDPSASRARFPQRLGRAPCFEVGLRKPPPPPLLSPPSFSSGSSRPLQRPRGPKDGAGRKVCAKLVKRLPGESGSCEDGQSAPAQPPRRRTGTRACPPRAPLWR.

Positions 1-23 (MAGVRARAPLPLALLLSLPAAPG) are cleaved as a signal peptide. The disordered stretch occupies residues 43–127 (CFEVGLRKPP…ACPPRAPLWR (85 aa)). The segment covering 59–70 (PPSFSSGSSRPL) has biased composition (low complexity).

It is found in the secreted. This is an uncharacterized protein from Homo sapiens (Human).